The chain runs to 1346 residues: Adhesion G protein-coupled receptor F5 (1346 aa).

The first 21 residues, 1–21, serve as a signal peptide directing secretion; it reads MKSPRRTTLCLMFIVIYSSKA. The Extracellular portion of the chain corresponds to 22-1006; that stretch reads ALNWNYESTI…MSPDSPDPSS (985 aa). Residues asparagine 73, asparagine 94, asparagine 106, asparagine 188, asparagine 256, asparagine 272, asparagine 301, asparagine 315, asparagine 328, asparagine 398, asparagine 472, asparagine 487, asparagine 505, asparagine 540, asparagine 627, asparagine 649, asparagine 666, asparagine 820, asparagine 931, asparagine 963, and asparagine 982 are each glycosylated (N-linked (GlcNAc...) asparagine). Residues 166–273 form the SEA domain; sequence LQEDVTLNMR…NSFQAVTINE (108 aa). 3 Ig-like domains span residues 267 to 368, 369 to 466, and 471 to 561; these read QAVT…IDVM, PIQI…IKVT, and ANLT…KDVI. Cystine bridges form between cysteine 293–cysteine 350 and cysteine 391–cysteine 449. Cysteine 492 and cysteine 545 are oxidised to a cystine. Residues 842–1003 enclose the GAIN-B domain; the sequence is PPLSFSQTNV…SILMSPDSPD (162 aa). Intrachain disulfides connect cysteine 954/cysteine 985 and cysteine 973/cysteine 987. The interval 954–1003 is GPS; sequence CVFWNFRLANNTGGWDSSGCYVEEGDGDNVTCICDHLTSFSILMSPDSPD. A tethered agonist region spans residues 991–1006; sequence TSFSILMSPDSPDPSS. A helical membrane pass occupies residues 1007–1027; sequence LLGILLDIISYVGVGFSILSL. At 1028 to 1053 the chain is on the cytoplasmic side; the sequence is AACLVVEAVVWKSVTKNRTSYMRHTC. The helical transmembrane segment at 1054-1074 threads the bilayer; sequence IVNIAASLLVANTWFIVVAAI. The Extracellular portion of the chain corresponds to 1075-1090; sequence QDNRYILCKTACVAAT. The helical transmembrane segment at 1091–1111 threads the bilayer; it reads FFIHFFYLSVFFWMLTLGLML. At 1112 to 1128 the chain is on the cytoplasmic side; the sequence is FYRLVFILHETSRSTQK. The helical transmembrane segment at 1129–1149 threads the bilayer; that stretch reads AIAFCLGYGCPLAISVITLGA. Residues 1150 to 1173 are Extracellular-facing; it reads TQPREVYTRKNVCWLNWEDTKALL. Residues 1174–1194 form a helical membrane-spanning segment; that stretch reads AFAIPALIIVVVNITITIVVI. At 1195 to 1220 the chain is on the cytoplasmic side; the sequence is TKILRPSIGDKPCKQEKSSLFQISKS. Residues 1221-1241 form a helical membrane-spanning segment; sequence IGVLTPLLGLTWGFGLTTVFP. The Extracellular segment spans residues 1242-1244; sequence GTN. The helical transmembrane segment at 1245-1265 threads the bilayer; the sequence is LVFHIIFAILNVFQGLFILLF. The Cytoplasmic portion of the chain corresponds to 1266–1346; that stretch reads GCLWDLKVQE…NSSSASSLLN (81 aa). A Phosphothreonine modification is found at threonine 1300. Serine 1307 carries the post-translational modification Phosphoserine. Residues 1327–1346 are disordered; sequence TPEATSSSLENSSSASSLLN. Residues 1329 to 1346 are compositionally biased toward low complexity; that stretch reads EATSSSLENSSSASSLLN.

It belongs to the G-protein coupled receptor 2 family. Adhesion G-protein coupled receptor (ADGR) subfamily. As to quaternary structure, homodimer; disulfide-linked. Heterodimer of 2 chains generated by proteolytic processing; the large extracellular N-terminal fragment and the membrane-bound C-terminal fragment predominantly remain associated and non-covalently linked. Fragment generates by the processing enzyme furin remains attached to the extracellular N-terminal fragment. Interacts (via N-terminal extracellular domain) with SFTPD. In terms of processing, highly glycosylated. Post-translationally, proteolytically cleaved at multiple sites: one in the GPS region of the GAIN-B domain (S1 site) and the other in the SEA domain (S2 site). The proteolytic cleavage at S1 site generates an extracellular subunit and a seven-transmembrane subunit. The proteolytic cleavage at S2 site generates a fragment that undergoes proteolytic cleavage by the processing enzyme furin. Expressed in lung endothelial cells and in alveolar type II (ATII) cells (at protein level). Expressed high levels in subcutaneous adipose tissue in lean individuals and at lower levels in visceral fat. Expression levels in subcutaneous adipose tissue drastically drop in obese individuals.

It localises to the cell membrane. Its activity is regulated as follows. As an adhesion G protein-coupled receptor (aGPCR) exhibits a large N-terminal extracellular domain containing highly conserved GPCR autoproteolysis-inducing (GAIN) domain. During synthesis, intracellular autoproteolytic processing of nascent chain within the GAIN domain generates a mature protein, consisting of an N-terminal fragment that is non-covalently linked to the C-terminal fragment. The mature protein is routed to the plasma membrane where the N- and C-terminal fragments remain associated, forming the holoreceptor. Dissociation of the aGPCR fragments stimulates G protein signaling through the action of the tethered-peptide agonist stalk that is occluded within the GAIN domain in the holoreceptor form. This dissociation might be induced by ligand binding, such as that of sFNDC4. Its function is as follows. Adhesion G protein-coupled receptor. In alveolar type II (ATII or AT2) cells, required for normal lung surfactant homeostasis. Modulation of both surfactant secretion and uptake by ATII cells is mediated by the downstream activation of GNAQ/GNA11 proteins and may be a consequence of increased cortical F-actin assembly induced by ADGRF5 activation. In the kidney, may play a role in the regulation of acid excretion into the primary urine, possibly by regulating the surface expression of V-ATPase proton pump. As a receptor for soluble FNDC4 (sFNDC4), required for proper systemic glucose tolerance, specifically sensitizing white adipose tissue to insulin. Also plays a role in sFNDC4-induced decrease of local inflammation in white adipose tissue. In Homo sapiens (Human), this protein is Adhesion G protein-coupled receptor F5.